We begin with the raw amino-acid sequence, 598 residues long: UvrABC system protein C (598 aa).

Residues 13–91 (TLPGVYRMVD…IKGLKPRFNI (79 aa)) enclose the GIY-YIG domain. One can recognise a UVR domain in the interval 200-235 (TALTEEITAQMNAAAENLDFETAAYLRDRLRMLATV).

This sequence belongs to the UvrC family. As to quaternary structure, interacts with UvrB in an incision complex.

It is found in the cytoplasm. The UvrABC repair system catalyzes the recognition and processing of DNA lesions. UvrC both incises the 5' and 3' sides of the lesion. The N-terminal half is responsible for the 3' incision and the C-terminal half is responsible for the 5' incision. The chain is UvrABC system protein C from Thiobacillus denitrificans (strain ATCC 25259 / T1).